A 147-amino-acid polypeptide reads, in one-letter code: Transthyretin (147 aa).

Positions 1–20 are cleaved as a signal peptide; sequence MASLRLFLLCLAGLIFASEA. Cys-30 is subject to Sulfocysteine. Lys-35 is an L-thyroxine binding site. Glu-62 is subject to 4-carboxyglutamate. Residue Ser-72 is modified to Phosphoserine. Glu-74 is a binding site for L-thyroxine. The N-linked (GlcNAc...) asparagine glycan is linked to Asn-118. Residue Ser-137 coordinates L-thyroxine.

Belongs to the transthyretin family. As to quaternary structure, homotetramer. Dimer of dimers. In the homotetramer, subunits assemble around a central channel that can accommodate two ligand molecules. Interacts with RBP4. Post-translationally, sulfonation of the reactive cysteine Cys-30 enhances the stability of the native conformation of TTR, avoiding misassembly of the protein leading to amyloid formation. In terms of tissue distribution, detected in serum and cerebrospinal fluid (at protein level). Highly expressed in the choroid plexus. Detected at lower levels in the liver.

Its subcellular location is the secreted. Thyroid hormone-binding protein. Probably transports thyroxine from the bloodstream to the brain. The sequence is that of Transthyretin (Ttr) from Rattus norvegicus (Rat).